We begin with the raw amino-acid sequence, 58 residues long: Histatherin (58 aa).

The signal sequence occupies residues 1–19 (MKIFIFIFIMALILAMIRA).

This sequence belongs to the histatin/statherin family. As to expression, expressed in mammary glands.

The protein resides in the secreted. The chain is Histatherin from Bos taurus (Bovine).